The following is a 670-amino-acid chain: Tyramine beta-hydroxylase (670 aa).

Basic residues predominate over residues His26 to Lys35. A disordered region spans residues His26–Arg63. Low complexity predominate over residues Gln38–Gln61. The helical transmembrane segment at Pro65–Thr81 threads the bilayer. The DOMON domain maps to Lys104–Gly220. Asn235 carries N-linked (GlcNAc...) asparagine glycosylation. Residue Tyr281 is part of the active site. Intrachain disulfides connect Cys283–Cys334 and Cys319–Cys344. Residues His312 and His313 each coordinate Cu(2+). His382, His461, His463, and Met536 together coordinate Cu(2+). 3 disulfide bridges follow: Cys439/Cys552, Cys443/Cys613, and Cys515/Cys537. Residue His461 is part of the active site. Asn614 carries N-linked (GlcNAc...) asparagine glycosylation.

It belongs to the copper type II ascorbate-dependent monooxygenase family. As to quaternary structure, is most likely a monomer under physiological conditions, although under conditions of high pH and low ionic strength the dimeric form predominates. Both forms are equally active. It depends on Cu(2+) as a cofactor. Present in head and in neurons innervating the oviduct (at protein level).

The protein resides in the membrane. The catalysed reaction is tyramine + L-ascorbate + O2 = (R)-octopamine + L-dehydroascorbate + H2O. In terms of biological role, catalyzes the hydroxylation of tyramine into octopamine, a neurotransmitter involved in ovulation and locomotion. Functions in an amine-mediated Bacc-dependent signaling pathway that negatively regulates acute ethanol sensitivity. Involved in facilitation of nociceptive escape behavior in response to potentially damaging stimuli, such as high temperatures. In Drosophila melanogaster (Fruit fly), this protein is Tyramine beta-hydroxylase (Tbh).